The following is a 182-amino-acid chain: Ribosome-recycling factor (182 aa).

The tract at residues 136-160 is disordered; it reads VKKSEKDGDLSEDQSRDEQEKIQKE.

Belongs to the RRF family.

The protein resides in the cytoplasm. Functionally, responsible for the release of ribosomes from messenger RNA at the termination of protein biosynthesis. May increase the efficiency of translation by recycling ribosomes from one round of translation to another. This chain is Ribosome-recycling factor, found in Prochlorococcus marinus (strain NATL1A).